A 216-amino-acid polypeptide reads, in one-letter code: uncharacterized protein (216 aa).

A helical transmembrane segment spans residues 1–21 (MTIVHFVGSLFFFFFFSYIFF).

The protein localises to the membrane. This is an uncharacterized protein from Saccharomyces cerevisiae (strain ATCC 204508 / S288c) (Baker's yeast).